Consider the following 160-residue polypeptide: Phosphopantetheine adenylyltransferase (160 aa).

Thr-10 lines the substrate pocket. Residues 10-11 (TF) and His-18 contribute to the ATP site. Positions 42, 74, and 88 each coordinate substrate. ATP-binding positions include 89-91 (GLR), Glu-99, and 124-130 (NSFISST).

It belongs to the bacterial CoaD family. As to quaternary structure, homohexamer. Mg(2+) is required as a cofactor.

Its subcellular location is the cytoplasm. It catalyses the reaction (R)-4'-phosphopantetheine + ATP + H(+) = 3'-dephospho-CoA + diphosphate. Its pathway is cofactor biosynthesis; coenzyme A biosynthesis; CoA from (R)-pantothenate: step 4/5. Its function is as follows. Reversibly transfers an adenylyl group from ATP to 4'-phosphopantetheine, yielding dephospho-CoA (dPCoA) and pyrophosphate. This is Phosphopantetheine adenylyltransferase from Aeromonas salmonicida (strain A449).